We begin with the raw amino-acid sequence, 364 residues long: Fructose-1,6-bisphosphatase class 1 1 (364 aa).

4 residues coordinate Mg(2+): Glu99, Asp121, Leu123, and Asp124. Residues 124 to 127 (DGSS) and Asn220 each bind substrate. Residue Glu292 participates in Mg(2+) binding.

This sequence belongs to the FBPase class 1 family. In terms of assembly, homotetramer. The cofactor is Mg(2+).

Its subcellular location is the cytoplasm. It catalyses the reaction beta-D-fructose 1,6-bisphosphate + H2O = beta-D-fructose 6-phosphate + phosphate. It functions in the pathway carbohydrate biosynthesis; gluconeogenesis. This chain is Fructose-1,6-bisphosphatase class 1 1, found in Albidiferax ferrireducens (strain ATCC BAA-621 / DSM 15236 / T118) (Rhodoferax ferrireducens).